The sequence spans 247 residues: MSGHSKWHNIQGRKNAQDAKRGKIFQKISRDLYQAAKAGDPDPDNNPQLRLVMDKARAANMPKQNIQRAIDKATGAGGANFEEITYEGYGPGGVAVMVFCLTDNKNRTAAAIRSAFTHSGGSLGATGSVSYMFNRQGLIEILRDGLDKDEDDMLMDALDAGADDMQATDDKFQIFTDPSAMTSVRDALQEQGYELETAEVTMIPENKTKVPADKVGQYQHLIDELEDNDDVADVYEAAFVEDADQGE.

Positions 1–22 (MSGHSKWHNIQGRKNAQDAKRG) are disordered.

Belongs to the TACO1 family.

The protein localises to the cytoplasm. This Limosilactobacillus fermentum (strain NBRC 3956 / LMG 18251) (Lactobacillus fermentum) protein is Probable transcriptional regulatory protein LAF_0541.